A 209-amino-acid polypeptide reads, in one-letter code: D-aminoacyl-tRNA deacylase 1 (209 aa).

The Mg(2+) site is built by valine 4, glutamine 6, and cysteine 28. Residues 139–140 (GP) carry the Gly-cisPro motif, important for rejection of L-amino acids motif. The tract at residues 142–209 (TIELESPAPG…EGDVSSEREP (68 aa)) is disordered. 2 stretches are compositionally biased toward basic and acidic residues: residues 159 to 170 (QLSKLEKQQQRK) and 181 to 194 (SSKERNTPRKEDRS). Phosphoserine occurs at positions 197, 204, and 205.

It belongs to the DTD family. In terms of assembly, homodimer. Interacts with CDC45 and TOPBP1. Post-translationally, preferentially phosphorylated in cells arrested early in S phase. Phosphorylation in the C-terminus weakens the interaction with CDC45. Expressed in many adult and fetal tissues. Highest levels in testis, ovary, spleen and in adult and fetal brain.

The protein localises to the nucleus. Its subcellular location is the cytoplasm. It catalyses the reaction glycyl-tRNA(Ala) + H2O = tRNA(Ala) + glycine + H(+). The enzyme catalyses a D-aminoacyl-tRNA + H2O = a tRNA + a D-alpha-amino acid + H(+). Its function is as follows. Possible ATPase involved in DNA replication, may facilitate loading of CDC45 onto pre-replication complexes. In terms of biological role, an aminoacyl-tRNA editing enzyme that deacylates mischarged D-aminoacyl-tRNAs. Also deacylates mischarged glycyl-tRNA(Ala), protecting cells against glycine mischarging by AlaRS. Acts via tRNA-based rather than protein-based catalysis; rejects L-amino acids rather than detecting D-amino acids in the active site. By recycling D-aminoacyl-tRNA to D-amino acids and free tRNA molecules, this enzyme counteracts the toxicity associated with the formation of D-aminoacyl-tRNA entities in vivo and helps enforce protein L-homochirality. The polypeptide is D-aminoacyl-tRNA deacylase 1 (DTD1) (Homo sapiens (Human)).